Reading from the N-terminus, the 311-residue chain is tRNA-cytidine(32) 2-sulfurtransferase (311 aa).

The PP-loop motif signature appears at 47–52; sequence SGGKDS. [4Fe-4S] cluster contacts are provided by C122, C125, and C213.

The protein belongs to the TtcA family. Homodimer. Mg(2+) is required as a cofactor. Requires [4Fe-4S] cluster as cofactor.

The protein localises to the cytoplasm. The catalysed reaction is cytidine(32) in tRNA + S-sulfanyl-L-cysteinyl-[cysteine desulfurase] + AH2 + ATP = 2-thiocytidine(32) in tRNA + L-cysteinyl-[cysteine desulfurase] + A + AMP + diphosphate + H(+). The protein operates within tRNA modification. In terms of biological role, catalyzes the ATP-dependent 2-thiolation of cytidine in position 32 of tRNA, to form 2-thiocytidine (s(2)C32). The sulfur atoms are provided by the cysteine/cysteine desulfurase (IscS) system. This is tRNA-cytidine(32) 2-sulfurtransferase from Citrobacter koseri (strain ATCC BAA-895 / CDC 4225-83 / SGSC4696).